A 262-amino-acid chain; its full sequence is Trypsin theta (262 aa).

The signal sequence occupies residues 1–19 (MHRLVVLLVCLAVGSACAG). The propeptide at 20–34 (TVGVSNGDPFEREGR) is activation peptide. A Peptidase S1 domain is found at 35–260 (IVGGEDTTIG…LRKWILNASE (226 aa)). A disulfide bridge links Cys61 with Cys77. Catalysis depends on charge relay system residues His76 and Asp121. Disulfide bonds link Cys186/Cys203 and Cys212/Cys236. The active-site Charge relay system is the Ser216.

Belongs to the peptidase S1 family.

The protein resides in the secreted. The protein localises to the extracellular space. It catalyses the reaction Preferential cleavage: Arg-|-Xaa, Lys-|-Xaa.. The polypeptide is Trypsin theta (thetaTry) (Drosophila melanogaster (Fruit fly)).